A 498-amino-acid polypeptide reads, in one-letter code: Glycerol kinase (498 aa).

Residue T12 coordinates ADP. ATP-binding residues include T12, T13, and S14. T12 lines the sn-glycerol 3-phosphate pocket. Position 16 (R16) interacts with ADP. Sn-glycerol 3-phosphate is bound by residues R82, E83, and Y134. R82, E83, and Y134 together coordinate glycerol. At H230 the chain carries Phosphohistidine; by HPr. D244 serves as a coordination point for sn-glycerol 3-phosphate. Glycerol is bound by residues D244 and Q245. Residues T266, G309, Q313, G410, and N414 each coordinate ADP. ATP is bound by residues T266, G309, Q313, and G410.

The protein belongs to the FGGY kinase family. In terms of assembly, homotetramer and homodimer (in equilibrium). The phosphoenolpyruvate-dependent sugar phosphotransferase system (PTS), including enzyme I, and histidine-containing protein (HPr) are required for the phosphorylation, which leads to the activation of the enzyme.

It catalyses the reaction glycerol + ATP = sn-glycerol 3-phosphate + ADP + H(+). The protein operates within polyol metabolism; glycerol degradation via glycerol kinase pathway; sn-glycerol 3-phosphate from glycerol: step 1/1. With respect to regulation, activated by phosphorylation and inhibited by fructose 1,6-bisphosphate (FBP). Functionally, key enzyme in the regulation of glycerol uptake and metabolism. Catalyzes the phosphorylation of glycerol to yield sn-glycerol 3-phosphate. The sequence is that of Glycerol kinase from Staphylococcus aureus (strain COL).